The primary structure comprises 71 residues: MIKFSVILGMIRCSLTHITTKNTVNALKRMIYPKQKPSFFHEFKVLYKLLKKFCIKGIMIKNIRSCMGYFL.

An N-terminal signal peptide occupies residues 1-26 (MIKFSVILGMIRCSLTHITTKNTVNA).

This is an uncharacterized protein from Bacillus subtilis (strain 168).